The sequence spans 660 residues: Secretin PulD (660 aa).

An N-terminal signal peptide occupies residues Met-1–Ala-27. The interval Glu-28 to Gly-124 is N0. Positions Glu-126–Gly-190 are N1. The tract at residues Asp-191–Ala-264 is N2. The segment at Gly-267–Asp-341 is N3. Positions Gln-346–Asp-596 are secretin. The tract at residues Asp-598 to Leu-660 is s domain.

It belongs to the bacterial secretin family. GSP D subfamily. As to quaternary structure, forms a cylindrical channel with 15 subunits.

It localises to the cell outer membrane. Its function is as follows. Involved in a type II secretion system (T2SS, formerly general secretion pathway, GSP) for the export of proteins. Required for the translocation of pullulanase. This subunit forms the outer membrane channel. The protein is Secretin PulD (pulD) of Klebsiella pneumoniae.